The sequence spans 238 residues: MLVIPAVDMKNKKCVQLIQGNPDKKHVELDNPPEIAKKWVSEGAEMLHLVDLDGALDGKRVNDEFIEEIIKTSGVPVQIGGGIRSIEDAVYLVEKGAKKVIIGTIAVEKPEIIKELSENIGSEKIMVSLDAKDGKVVIKGWKEKTKYTPVEIGKILEEMGAGSILFTNVDSEGLLNGINIEPTKELVENLKIPIVASGGVTTIDDLLKFKEIGVYGVVVGSAIYKNMINLKDAIEAVK.

Aspartate 8 (proton acceptor) is an active-site residue. The active-site Proton donor is the aspartate 130.

The protein belongs to the HisA/HisF family.

Its subcellular location is the cytoplasm. It catalyses the reaction 1-(5-phospho-beta-D-ribosyl)-5-[(5-phospho-beta-D-ribosylamino)methylideneamino]imidazole-4-carboxamide = 5-[(5-phospho-1-deoxy-D-ribulos-1-ylimino)methylamino]-1-(5-phospho-beta-D-ribosyl)imidazole-4-carboxamide. Its pathway is amino-acid biosynthesis; L-histidine biosynthesis; L-histidine from 5-phospho-alpha-D-ribose 1-diphosphate: step 4/9. The chain is 1-(5-phosphoribosyl)-5-[(5-phosphoribosylamino)methylideneamino] imidazole-4-carboxamide isomerase from Methanococcus maripaludis (strain C5 / ATCC BAA-1333).